We begin with the raw amino-acid sequence, 541 residues long: Chaperonin GroEL 5 (541 aa).

ATP-binding positions include 30-33, G415, and D496; that span reads TLGP.

The protein belongs to the chaperonin (HSP60) family. As to quaternary structure, forms a cylinder of 14 subunits composed of two heptameric rings stacked back-to-back. Interacts with the co-chaperonin GroES.

Its subcellular location is the cytoplasm. It catalyses the reaction ATP + H2O + a folded polypeptide = ADP + phosphate + an unfolded polypeptide.. Its function is as follows. Together with its co-chaperonin GroES, plays an essential role in assisting protein folding. The GroEL-GroES system forms a nano-cage that allows encapsulation of the non-native substrate proteins and provides a physical environment optimized to promote and accelerate protein folding. In Bradyrhizobium diazoefficiens (strain JCM 10833 / BCRC 13528 / IAM 13628 / NBRC 14792 / USDA 110), this protein is Chaperonin GroEL 5.